We begin with the raw amino-acid sequence, 512 residues long: NAD-dependent deacetylase sir2A (512 aa).

A UBP-type zinc finger spans residues 7-110 (IECIHLKDEY…EILENIKSSN (104 aa)). Cysteine 9, histidine 11, cysteine 34, cysteine 37, cysteine 46, cysteine 49, cysteine 54, histidine 61, histidine 65, histidine 71, cysteine 84, and cysteine 87 together coordinate Zn(2+). Residues 113 to 122 (DKIVPKKDQK) show a composition bias toward basic and acidic residues. The tract at residues 113-196 (DKIVPKKDQK…DESSSEGEES (84 aa)) is disordered. Positions 130-175 (VVPSASITTSSTTTSISKQTTVNNTTTTSSSSTTTTTTTTSTTINN) are enriched in low complexity. The segment covering 176–195 (NEEEEESESETDESSSEGEE) has biased composition (acidic residues). The region spanning 231–503 (CVLKKPTIEE…LDLIKLLGWE (273 aa)) is the Deacetylase sirtuin-type domain. Histidine 361 serves as the catalytic Proton acceptor. Zn(2+) contacts are provided by cysteine 369, cysteine 372, cysteine 393, and cysteine 399.

The protein belongs to the sirtuin family. Zn(2+) is required as a cofactor.

The catalysed reaction is N(6)-acetyl-L-lysyl-[protein] + NAD(+) + H2O = 2''-O-acetyl-ADP-D-ribose + nicotinamide + L-lysyl-[protein]. In terms of biological role, NAD-dependent deacetylase, which plays an important role in the regulation of transcriptional repression. This Dictyostelium discoideum (Social amoeba) protein is NAD-dependent deacetylase sir2A (sir2A).